A 360-amino-acid chain; its full sequence is Peptide chain release factor 1 (360 aa).

Glutamine 235 is modified (N5-methylglutamine). The segment at 284 to 303 (RERQSKEAAERKSLVGSGDR) is disordered.

It belongs to the prokaryotic/mitochondrial release factor family. In terms of processing, methylated by PrmC. Methylation increases the termination efficiency of RF1.

It localises to the cytoplasm. Its function is as follows. Peptide chain release factor 1 directs the termination of translation in response to the peptide chain termination codons UAG and UAA. The polypeptide is Peptide chain release factor 1 (Bordetella avium (strain 197N)).